Reading from the N-terminus, the 276-residue chain is NADH-cytochrome b5 reductase 2 (276 aa).

The FAD-binding FR-type domain occupies 15-127 (EAKYPLPLIE…RGPTGRLFYN (113 aa)). Lys17 is modified (N6-acetyllysine). Phosphotyrosine is present on Tyr18. FAD-binding positions include 107–137 (ENMK…IKAN) and 146–181 (LVHH…RMSL).

Belongs to the flavoprotein pyridine nucleotide cytochrome reductase family. Requires FAD as cofactor.

The enzyme catalyses 2 Fe(III)-[cytochrome b5] + NADH = 2 Fe(II)-[cytochrome b5] + NAD(+) + H(+). Functionally, NADH-cytochrome b5 reductases are involved in desaturation and elongation of fatty acids, cholesterol biosynthesis, drug metabolism, and, in erythrocyte, methemoglobin reduction. Responsible for NADH-dependent lucigenin chemiluminescence in spermatozoa by reducing both lucigenin and 2-[4-iodophenyl]-3-[4-nitrophenyl]-5-[2,4-disulfophenyl]-2H tetrazolium monosodium salt (WST-1). The sequence is that of NADH-cytochrome b5 reductase 2 (Cyb5r2) from Mus musculus (Mouse).